The sequence spans 126 residues: SPbeta prophage-derived uncharacterized protein YorC (126 aa).

The chain is SPbeta prophage-derived uncharacterized protein YorC (yorC) from Bacillus subtilis (strain 168).